The following is a 796-amino-acid chain: ATP-dependent DNA helicase PIF6 (796 aa).

Residues 197–230 (RPTGLPSAHSGGKLPKHMGGDELNPQLEGSTTPG) form a disordered region. 255 to 262 (GSAGTGKT) serves as a coordination point for ATP. A DNA-binding region spans residues 636 to 655 (QAYVALSRVRSREDLMLTAF). Disordered stretches follow at residues 692–719 (KGKT…PEEH) and 762–796 (TSSA…VDDD).

It belongs to the helicase family. PIF1 subfamily. Monomer. It depends on Mg(2+) as a cofactor.

The protein resides in the nucleus. It carries out the reaction Couples ATP hydrolysis with the unwinding of duplex DNA at the replication fork by translocating in the 5'-3' direction. This creates two antiparallel DNA single strands (ssDNA). The leading ssDNA polymer is the template for DNA polymerase III holoenzyme which synthesizes a continuous strand.. The catalysed reaction is ATP + H2O = ADP + phosphate + H(+). DNA-dependent ATPase and 5'-3' DNA helicase required for the maintenance of genome stability. The polypeptide is ATP-dependent DNA helicase PIF6 (Trypanosoma brucei brucei (strain 927/4 GUTat10.1)).